We begin with the raw amino-acid sequence, 1857 residues long: U3 small nucleolar RNA-associated protein 10 (1857 aa).

Residues 267-287 (LTAYSIISVLSSLVPLSADLV) traverse the membrane as a helical segment. An HEAT repeat occupies 1817–1855 (LIPYIAELLEDDDEEVELEVRNGLVRVIENVLGEPLDRY).

This sequence belongs to the HEATR1/UTP10 family. In terms of assembly, component of the ribosomal small subunit (SSU) processome.

Its subcellular location is the nucleus. It is found in the nucleolus. The protein localises to the membrane. In terms of biological role, involved in nucleolar processing of pre-18S ribosomal RNA. Involved in ribosome biosynthesis. The protein is U3 small nucleolar RNA-associated protein 10 of Debaryomyces hansenii (strain ATCC 36239 / CBS 767 / BCRC 21394 / JCM 1990 / NBRC 0083 / IGC 2968) (Yeast).